A 190-amino-acid chain; its full sequence is Protein GrpE (190 aa).

Positions 1-26 are enriched in basic and acidic residues; sequence MADKEKDAVIVDETEHVDVDSKESKK. The interval 1–31 is disordered; sequence MADKEKDAVIVDETEHVDVDSKESKKEKKTK.

This sequence belongs to the GrpE family. Homodimer.

It localises to the cytoplasm. Its function is as follows. Participates actively in the response to hyperosmotic and heat shock by preventing the aggregation of stress-denatured proteins, in association with DnaK and GrpE. It is the nucleotide exchange factor for DnaK and may function as a thermosensor. Unfolded proteins bind initially to DnaJ; upon interaction with the DnaJ-bound protein, DnaK hydrolyzes its bound ATP, resulting in the formation of a stable complex. GrpE releases ADP from DnaK; ATP binding to DnaK triggers the release of the substrate protein, thus completing the reaction cycle. Several rounds of ATP-dependent interactions between DnaJ, DnaK and GrpE are required for fully efficient folding. The chain is Protein GrpE from Acholeplasma laidlawii (strain PG-8A).